We begin with the raw amino-acid sequence, 212 residues long: Pyridoxine/pyridoxamine 5'-phosphate oxidase (212 aa).

Substrate is bound by residues 7-10 and K65; that span reads REEY. Residues 60–65, 75–76, K82, and Q104 contribute to the FMN site; these read RTVLLK and FT. Substrate contacts are provided by Y122, R126, and S130. Residues 139–140 and W184 each bind FMN; that span reads QS. Position 190 to 192 (190 to 192) interacts with substrate; it reads RLH. R194 contacts FMN.

This sequence belongs to the pyridoxamine 5'-phosphate oxidase family. In terms of assembly, homodimer. FMN is required as a cofactor.

The catalysed reaction is pyridoxamine 5'-phosphate + O2 + H2O = pyridoxal 5'-phosphate + H2O2 + NH4(+). The enzyme catalyses pyridoxine 5'-phosphate + O2 = pyridoxal 5'-phosphate + H2O2. The protein operates within cofactor metabolism; pyridoxal 5'-phosphate salvage; pyridoxal 5'-phosphate from pyridoxamine 5'-phosphate: step 1/1. It functions in the pathway cofactor metabolism; pyridoxal 5'-phosphate salvage; pyridoxal 5'-phosphate from pyridoxine 5'-phosphate: step 1/1. Its function is as follows. Catalyzes the oxidation of either pyridoxine 5'-phosphate (PNP) or pyridoxamine 5'-phosphate (PMP) into pyridoxal 5'-phosphate (PLP). This Rippkaea orientalis (strain PCC 8801 / RF-1) (Cyanothece sp. (strain PCC 8801)) protein is Pyridoxine/pyridoxamine 5'-phosphate oxidase.